We begin with the raw amino-acid sequence, 167 residues long: MASAEPLTALSRWYLYAIHGYFCEVMFTAAWEFVVNFNWKFPGVTSVWALFIYGTSILIVERMYLRLRGRCPLLVRCVIYTLWTYLWEFTTGFILRQFNACPWDYSQFDFDFMGLITLEYAVPWFCGALIMEQFIIRNTLRLRFDKDAEPGEPASPPALANGHVKTD.

Over 1-14 (MASAEPLTALSRWY) the chain is Cytoplasmic. The helical transmembrane segment at 15–35 (LYAIHGYFCEVMFTAAWEFVV) threads the bilayer. Topologically, residues 36–40 (NFNWK) are extracellular. The chain crosses the membrane as a helical span at residues 41–61 (FPGVTSVWALFIYGTSILIVE). The Cytoplasmic portion of the chain corresponds to 62–73 (RMYLRLRGRCPL). The chain crosses the membrane as a helical span at residues 74 to 94 (LVRCVIYTLWTYLWEFTTGFI). The Extracellular portion of the chain corresponds to 95–109 (LRQFNACPWDYSQFD). Residues 110-130 (FDFMGLITLEYAVPWFCGALI) form a helical membrane-spanning segment. At 131 to 167 (MEQFIIRNTLRLRFDKDAEPGEPASPPALANGHVKTD) the chain is on the cytoplasmic side. The tract at residues 148–167 (AEPGEPASPPALANGHVKTD) is disordered.

It belongs to the TMEM229 family.

The protein resides in the membrane. The protein is Transmembrane protein 229B (TMEM229B) of Mus musculus (Mouse).